Reading from the N-terminus, the 104-residue chain is Large ribosomal subunit protein bL21 (104 aa).

This sequence belongs to the bacterial ribosomal protein bL21 family. As to quaternary structure, part of the 50S ribosomal subunit. Contacts protein L20.

This protein binds to 23S rRNA in the presence of protein L20. This chain is Large ribosomal subunit protein bL21, found in Streptococcus uberis (strain ATCC BAA-854 / 0140J).